Here is a 160-residue protein sequence, read N- to C-terminus: UPF0178 protein BB1267 (160 aa).

This sequence belongs to the UPF0178 family.

The sequence is that of UPF0178 protein BB1267 from Bordetella bronchiseptica (strain ATCC BAA-588 / NCTC 13252 / RB50) (Alcaligenes bronchisepticus).